Consider the following 235-residue polypeptide: Protein FEV (235 aa).

A DNA-binding region (ETS) is located at residues 58–138; the sequence is IQLWQFLLEL…HGKRYAYKFD (81 aa).

This sequence belongs to the ETS family. In terms of tissue distribution, expressed by serotonergic neurons in anterior and posterior raphe.

The protein resides in the nucleus. In terms of biological role, functions as a transcriptional regulator. Functions in the differentiation and the maintenance of the central serotonergic neurons. May play a role in cell growth. The protein is Protein FEV (fev) of Danio rerio (Zebrafish).